Consider the following 225-residue polypeptide: Ribonuclease T (225 aa).

The interval 1-21 (MSEDHFDEEHEGHGGGGGSRH) is disordered. The 175-residue stretch at 33–207 (VVVDVETGGF…YDTEKTAELF (175 aa)) folds into the Exonuclease domain. 4 residues coordinate Mg(2+): aspartate 36, glutamate 38, histidine 194, and aspartate 199. Histidine 194 serves as the catalytic Proton donor/acceptor.

Belongs to the RNase T family. Homodimer. Mg(2+) serves as cofactor.

Trims short 3' overhangs of a variety of RNA species, leaving a one or two nucleotide 3' overhang. Responsible for the end-turnover of tRNA: specifically removes the terminal AMP residue from uncharged tRNA (tRNA-C-C-A). Also appears to be involved in tRNA biosynthesis. This Pseudomonas syringae pv. tomato (strain ATCC BAA-871 / DC3000) protein is Ribonuclease T.